Reading from the N-terminus, the 293-residue chain is 4-hydroxy-tetrahydrodipicolinate synthase (293 aa).

T50 provides a ligand contact to pyruvate. The Proton donor/acceptor role is filled by Y138. The Schiff-base intermediate with substrate role is filled by K166. Residue V206 participates in pyruvate binding.

It belongs to the DapA family. As to quaternary structure, homotetramer; dimer of dimers.

It localises to the cytoplasm. It carries out the reaction L-aspartate 4-semialdehyde + pyruvate = (2S,4S)-4-hydroxy-2,3,4,5-tetrahydrodipicolinate + H2O + H(+). The protein operates within amino-acid biosynthesis; L-lysine biosynthesis via DAP pathway; (S)-tetrahydrodipicolinate from L-aspartate: step 3/4. Functionally, catalyzes the condensation of (S)-aspartate-beta-semialdehyde [(S)-ASA] and pyruvate to 4-hydroxy-tetrahydrodipicolinate (HTPA). This is 4-hydroxy-tetrahydrodipicolinate synthase from Cutibacterium acnes (strain DSM 16379 / KPA171202) (Propionibacterium acnes).